The chain runs to 345 residues: Acetylserotonin O-methyltransferase (345 aa).

S-adenosyl-L-methionine is bound by residues Y147, W164, D210, 235 to 237 (GDF), and R252. H255 functions as the Proton donor/acceptor in the catalytic mechanism. Substrate-binding residues include D256, N302, and Q306.

Belongs to the class I-like SAM-binding methyltransferase superfamily. Cation-independent O-methyltransferase family. Homodimer. Expressed in the pineal gland (at protein level). In the retina, very low expression is found at the mRNA level, and not at the protein level.

It carries out the reaction N-acetylserotonin + S-adenosyl-L-methionine = melatonin + S-adenosyl-L-homocysteine + H(+). Its pathway is aromatic compound metabolism; melatonin biosynthesis; melatonin from serotonin: step 1/2. Catalyzes the transfer of a methyl group onto N-acetylserotonin, producing melatonin (N-acetyl-5-methoxytryptamine). Its function is as follows. Does not show Acetylserotonin O-methyltransferase activity. This Homo sapiens (Human) protein is Acetylserotonin O-methyltransferase (ASMT).